The chain runs to 575 residues: V-type ATP synthase alpha chain (575 aa).

238–245 contacts ATP; the sequence is GPFGAGKT.

Belongs to the ATPase alpha/beta chains family.

It carries out the reaction ATP + H2O + 4 H(+)(in) = ADP + phosphate + 5 H(+)(out). Produces ATP from ADP in the presence of a proton gradient across the membrane. The V-type alpha chain is a catalytic subunit. The polypeptide is V-type ATP synthase alpha chain (atpA) (Borreliella burgdorferi (strain ATCC 35210 / DSM 4680 / CIP 102532 / B31) (Borrelia burgdorferi)).